A 269-amino-acid polypeptide reads, in one-letter code: Glucosyl-3-phosphoglycerate/mannosyl-3-phosphoglycerate phosphatase (269 aa).

D6 serves as the catalytic Nucleophile. Residues D6, D8, and D210 each coordinate Mg(2+).

It belongs to the HAD-like hydrolase superfamily. MPGP family. Monomer. It depends on Co(2+) as a cofactor. Mg(2+) is required as a cofactor.

The catalysed reaction is (2R)-2-O-(alpha-D-glucopyranosyl)-3-phospho-glycerate + H2O = (2R)-2-O-(alpha-D-glucopyranosyl)-glycerate + phosphate. It catalyses the reaction 2-O-(alpha-D-mannosyl)-3-phosphoglycerate + H2O = (2R)-2-O-(alpha-D-mannosyl)-glycerate + phosphate. Functionally, involved in the biosynthesis of glucosylglycerate. Catalyzes the dephosphorylation of glucosyl-3-phosphoglycerate (GPG) and mannosyl-3-phosphoglycerate (MPG) to glucosylglycerate (GG) and mannosylglycerate (MG), respectively. This Persephonella marina (strain DSM 14350 / EX-H1) protein is Glucosyl-3-phosphoglycerate/mannosyl-3-phosphoglycerate phosphatase.